Reading from the N-terminus, the 378-residue chain is 23S rRNA (uracil(747)-C(5))-methyltransferase RlmC (378 aa).

[4Fe-4S] cluster is bound by residues cysteine 3, cysteine 11, cysteine 14, and cysteine 87. The S-adenosyl-L-methionine site is built by glutamine 212, phenylalanine 241, glutamate 262, and asparagine 309. Cysteine 336 acts as the Nucleophile in catalysis.

It belongs to the class I-like SAM-binding methyltransferase superfamily. RNA M5U methyltransferase family. RlmC subfamily.

The enzyme catalyses uridine(747) in 23S rRNA + S-adenosyl-L-methionine = 5-methyluridine(747) in 23S rRNA + S-adenosyl-L-homocysteine + H(+). Functionally, catalyzes the formation of 5-methyl-uridine at position 747 (m5U747) in 23S rRNA. The sequence is that of 23S rRNA (uracil(747)-C(5))-methyltransferase RlmC from Shewanella halifaxensis (strain HAW-EB4).